The chain runs to 819 residues: Transferrin 2 (819 aa).

An N-terminal signal peptide occupies residues methionine 1–alanine 21. One can recognise a Transferrin-like 1 domain in the interval methionine 33–leucine 373. 2 cysteine pairs are disulfide-bonded: cysteine 36-cysteine 78 and cysteine 46-cysteine 69. Asparagine 48 and asparagine 66 each carry an N-linked (GlcNAc...) asparagine glycan. Fe(3+) is bound by residues aspartate 93 and tyrosine 121. 3 cysteine pairs are disulfide-bonded: cysteine 147-cysteine 237, cysteine 190-cysteine 213, and cysteine 273-cysteine 287. Hydrogencarbonate-binding residues include alanine 155 and glycine 156. Asparagine 187 is a glycosylation site (N-linked (GlcNAc...) asparagine). Fe(3+) is bound at residue tyrosine 231. The tract at residues glycine 325 to threonine 361 is disordered. A compositionally biased stretch (polar residues) spans arginine 332–threonine 361. The N-linked (GlcNAc...) asparagine glycan is linked to asparagine 388. Residues methionine 450 to cysteine 796 enclose the Transferrin-like 2 domain. 2 cysteine pairs are disulfide-bonded: cysteine 453-cysteine 490 and cysteine 463-cysteine 481. Positions 505 and 533 each coordinate Fe(3+). Intrachain disulfides connect cysteine 557–cysteine 646, cysteine 599–cysteine 621, cysteine 618–cysteine 629, and cysteine 687–cysteine 701. Residues threonine 559, alanine 565, and glycine 566 each contribute to the hydrogencarbonate site. Residue asparagine 720 is glycosylated (N-linked (GlcNAc...) asparagine). Cysteine 796 carries GPI-anchor amidated cysteine lipidation. Residues tyrosine 797–leucine 819 constitute a propeptide, removed in mature form.

This sequence belongs to the transferrin family. Forms a complex composed of septa junction proteins Nrx-IV/Nrx, Tsf2/MTf, Cont and Nrg during late embryogenesis.

The protein localises to the apicolateral cell membrane. It localises to the cell junction. The protein resides in the septate junction. Its function is as follows. Iron-binding protein and component of septate junctions that form the paracellular permeability barrier in epithelial tissues. In an iron-dependent manner, required for septate junction assembly during epithelial maturation in embryos and mature septa junctions stability. In Drosophila melanogaster (Fruit fly), this protein is Transferrin 2.